A 329-amino-acid polypeptide reads, in one-letter code: RING finger protein 225 (329 aa).

Residues 1–55 (MPCPRPFWLRHSRAPQGSGPSSPGSLSAPRSPSRGEDQEEEEEEEGDGSPGSGPI) form a disordered region. A compositionally biased stretch (low complexity) spans 14–32 (APQGSGPSSPGSLSAPRSP). Acidic residues predominate over residues 37–47 (DQEEEEEEEGD). An RING-type zinc finger spans residues 64–112 (CLICVSSFDGVFKLPKRLDCGHVFCLECLARLSLATAGGGNAVACPVCR). The disordered stretch occupies residues 122 to 181 (GLPALPTQSGLLPRDARAPPSRQGSVRFDRRRGLLYLRPPPPPPGPRKARAPPPPPPLRL). A compositionally biased stretch (pro residues) spans 159-179 (RPPPPPPGPRKARAPPPPPPL). The helical transmembrane segment at 203–223 (ALAVLVAAGLVVSGVYIFFLI) threads the bilayer. The interval 248-329 (FPPRPPPGSP…RGARRLWGSQ (82 aa)) is disordered. Acidic residues predominate over residues 281–293 (DALEPEAGPEDPA). The segment covering 294–304 (EAERTLDRRSD) has biased composition (basic and acidic residues).

It is found in the membrane. This chain is RING finger protein 225, found in Homo sapiens (Human).